Consider the following 1856-residue polypeptide: Protein TANC1 (1856 aa).

Met-1 carries the N-acetylmethionine modification. Disordered regions lie at residues 1–45 (MLKA…LSTT), 58–130 (SMSL…SCSP), 203–222 (KSPC…KDSG), 262–296 (RADN…PVPY), and 437–489 (IASS…RPRE). Residues 8 to 21 (KSREGGKGSKKEAG) are compositionally biased toward basic and acidic residues. Residues 29-45 (PALSSSGDSPVNSLSTT) show a composition bias toward polar residues. Phosphoserine is present on residues Ser-60, Ser-63, Ser-64, Ser-204, Ser-267, and Ser-462. The segment covering 60 to 77 (SLPSSPLLPRQSLLTQSR) has biased composition (low complexity). Polar residues predominate over residues 203 to 216 (KSPCETISSPSSTL). A compositionally biased stretch (low complexity) spans 439-475 (SSSPSLSPKSSDPTQDLPGTPLLSPSSSTSALSVTRT). ANK repeat units lie at residues 893 to 925 (EGLS…NVNY), 931 to 960 (NNAP…CLDG), 964 to 993 (NGMN…RVDH), 997 to 1026 (KGQC…SAGP), 1037 to 1066 (ALQQ…EHEI), 1075 to 1104 (WGET…AVSR), 1108 to 1137 (RGVP…DVNL), 1141 to 1170 (QGRT…ALSS), 1174 to 1203 (EGLS…EIDQ), 1207 to 1236 (NGRT…VIEH), and 1240 to 1269 (SGMR…KLGN). TPR repeat units lie at residues 1286 to 1319 (LQKL…FPRE), 1333 to 1366 (VSLY…KPKS), and 1368 to 1400 (EAFY…CPNN). The segment covering 1417-1426 (LQRNQQQKQQ) has biased composition (low complexity). 3 disordered regions span residues 1417-1597 (LQRN…FGDR), 1636-1720 (DMAP…NTPF), and 1832-1856 (HVST…ESNV). 2 positions are modified to phosphoserine: Ser-1436 and Ser-1463. Positions 1454–1463 (EEAEEEDTSS) are enriched in acidic residues. Polar residues-rich tracts occupy residues 1490–1505 (EGLQ…QSRA) and 1524–1556 (PTKQ…VSSQ). The segment covering 1656-1686 (SLSSSGSSGSPSSSIKMSSSTSSLTSSSSVS) has biased composition (low complexity). Ser-1665, Ser-1673, and Ser-1674 each carry phosphoserine.

The protein belongs to the TANC family. As to quaternary structure, interacts probably directly with DLG1, DLG4, HOMER1. Interacts with DLGAP1, INA, CAMK2A, GRIN2B and GRIA1. Interacts with TNIK and MINK1. Post-translationally, phosphorylated; by MINK1 and TNIK upon stimulation by RAP2A.

It localises to the postsynaptic density. May be a scaffold component in the postsynaptic density. This chain is Protein TANC1 (Tanc1), found in Mus musculus (Mouse).